The following is a 346-amino-acid chain: Phosphoribosylformylglycinamidine cyclo-ligase (346 aa).

This sequence belongs to the AIR synthase family.

The protein resides in the cytoplasm. It catalyses the reaction 2-formamido-N(1)-(5-O-phospho-beta-D-ribosyl)acetamidine + ATP = 5-amino-1-(5-phospho-beta-D-ribosyl)imidazole + ADP + phosphate + H(+). It participates in purine metabolism; IMP biosynthesis via de novo pathway; 5-amino-1-(5-phospho-D-ribosyl)imidazole from N(2)-formyl-N(1)-(5-phospho-D-ribosyl)glycinamide: step 2/2. In Bacillus cereus (strain ZK / E33L), this protein is Phosphoribosylformylglycinamidine cyclo-ligase.